A 189-amino-acid polypeptide reads, in one-letter code: Elongation factor P (189 aa).

It belongs to the elongation factor P family.

The protein resides in the cytoplasm. The protein operates within protein biosynthesis; polypeptide chain elongation. In terms of biological role, involved in peptide bond synthesis. Stimulates efficient translation and peptide-bond synthesis on native or reconstituted 70S ribosomes in vitro. Probably functions indirectly by altering the affinity of the ribosome for aminoacyl-tRNA, thus increasing their reactivity as acceptors for peptidyl transferase. In Sinorhizobium medicae (strain WSM419) (Ensifer medicae), this protein is Elongation factor P.